The following is a 507-amino-acid chain: Maturase K (507 aa).

This sequence belongs to the intron maturase 2 family. MatK subfamily.

It is found in the plastid. The protein localises to the chloroplast. Usually encoded in the trnK tRNA gene intron. Probably assists in splicing its own and other chloroplast group II introns. The polypeptide is Maturase K (Craterostigma plantagineum (Blue gem)).